A 582-amino-acid chain; its full sequence is Probable DNA ligase (582 aa).

ATP is bound at residue Glu-243. Lys-245 functions as the N6-AMP-lysine intermediate in the catalytic mechanism. Residues Arg-250, Arg-265, Glu-295, Phe-335, Arg-410, and Lys-416 each coordinate ATP.

This sequence belongs to the ATP-dependent DNA ligase family. It depends on Mg(2+) as a cofactor.

The catalysed reaction is ATP + (deoxyribonucleotide)n-3'-hydroxyl + 5'-phospho-(deoxyribonucleotide)m = (deoxyribonucleotide)n+m + AMP + diphosphate.. In terms of biological role, DNA ligase that seals nicks in double-stranded DNA during DNA replication, DNA recombination and DNA repair. The chain is Probable DNA ligase from Dictyoglomus thermophilum (strain ATCC 35947 / DSM 3960 / H-6-12).